Consider the following 515-residue polypeptide: Brahma-associated protein of 60 kDa (515 aa).

The interval 1-124 (MSQRFAPGQA…GGSKSDFATA (124 aa)) is disordered. A compositionally biased stretch (pro residues) spans 17–34 (QPPPPAPGMRPYPPPGAS). The span at 49 to 62 (PVPGTANVAGVPGV) shows a compositional bias: low complexity. Positions 90–103 (TGAGGGGVGSGGGS) are enriched in gly residues. Positions 116–204 (GSKSDFATAK…SKEPTNDGEE (89 aa)) are DNA-binding. One can recognise an SWIB/MDM2 domain in the interval 291 to 368 (YQPLQFKLDP…PQRLNPLLHP (78 aa)).

In terms of assembly, there are 2 distinct Brahma complexes in the fruit fly, the Brahma-associated proteins (BAP) and Polybromo-containing BAP (PBAP) complexes, which are composed of common subunits Brm, Mor, Snr1/Bap45, Bap111/Dalo, Bap55, Bap60 and Act42A/Bap47, and additional signature subunits osa in the BAP complex and Polybromo and Bap170 in the PBAP complex. Interacts with sisA and sc. Interacts with mor. Interacts with p53. Interacts with erm (via N-terminal). Interacts with akirin; interaction is immune stimulation-dependent; activates selected Rel target gene promoters.

In terms of biological role, involved in the recruitment and site-specific anchoring of the Brahma complex at specific promoter sites. The Brahma complex is a multiprotein complex which is the equivalent of the yeast SWI/SNF complex and acts by remodeling the chromatin by catalyzing an ATP-dependent alteration in the structure of nucleosomal DNA. This complex can both serve as a transcriptional coactivator or corepressor, depending on the context. Participates in X-chromosomal dosage compensation. Participates in neurogenesis. This chain is Brahma-associated protein of 60 kDa (Bap60), found in Drosophila melanogaster (Fruit fly).